The sequence spans 472 residues: Cannabinoid receptor 1 (472 aa).

The Extracellular portion of the chain corresponds to 1 to 116 (MKSILDGLAD…CFMILNPSQQ (116 aa)). Residues 2 to 23 (KSILDGLADTTFRTITTDLLYV) are required for mitochondrial localization. Asn-77 and Asn-83 each carry an N-linked (GlcNAc...) asparagine glycan. A helical membrane pass occupies residues 117-142 (LAIAVLSLTLGTFTVLENLLVLCVIL). Topologically, residues 143–154 (HSRSLRCRPSYH) are cytoplasmic. A helical membrane pass occupies residues 155-175 (FIGSLAVADLLGSVIFVYSFV). Topologically, residues 176 to 187 (DFHVFHRKDSPN) are extracellular. Residues 188–212 (VFLFKLGGVTASFTASVGSLFLTAI) form a helical membrane-spanning segment. Topologically, residues 213–232 (DRYISIHRPLAYKKIVTRPK) are cytoplasmic. A helical transmembrane segment spans residues 233 to 255 (AVVAFCLMWTIAIVIAVLPLLGW). Over 256–273 (NCKKLQSVCSDIFPLIDE) the chain is Extracellular. Residues 274–299 (TYLMFWIGVTSVLLLFIVYAYMYILW) traverse the membrane as a helical segment. Topologically, residues 300–344 (KAHIHAVRMIQRGTQKSIIIHTSEDGKVQVTRPDQARMDIRLAKT) are cytoplasmic. Residues 345 to 365 (LVLILVVLIICWGPLLAIMVY) form a helical membrane-spanning segment. At 366 to 377 (DVFGKMNKLIKT) the chain is on the extracellular side. The chain crosses the membrane as a helical span at residues 378–399 (VFAFCSMLCLLNSTVNPIIYAL). At 400 to 472 (RSKDLRHAFR…VSTNTSAKAL (73 aa)) the chain is on the cytoplasmic side. A lipid anchor (S-palmitoyl cysteine) is attached at Cys-415. Phosphoserine occurs at positions 425 and 429.

It belongs to the G-protein coupled receptor 1 family. Interacts (via C-terminus) with CNRIP1; this interaction attenuates constitutive, but not agonist-dependent, inhibition of voltage-gated Ca(2+) channels in neurons. Associates with G protein alpha subunits, including G(i) alpha-1/GNAI1, G(i) alpha-3/GNAI3 and G(o)-alpha/GNAO1; palmitoylation is important for interaction with GNAI3 and GNAO1. Palmitoylation at Cys-415 is important for recruitment at plasma membrane and lipid rafts and association with G protein alpha subunits. In terms of tissue distribution, expressed in cerebral arterial muscle cells and cerebral cortex (at protein level).

The protein localises to the cell membrane. The protein resides in the membrane raft. It localises to the mitochondrion outer membrane. Its subcellular location is the cell projection. It is found in the axon. The protein localises to the presynapse. With respect to regulation, hemopressin, a peptide derived from hemoglobin subunit alpha (HBA1 and/or HBA2), acts as an antagonist peptide: hemopressin-binding efficiently blocks cannabinoid receptor CNR1 and subsequent signaling. Its function is as follows. G-protein coupled receptor for endogenous cannabinoids (eCBs), including N-arachidonoylethanolamide (also called anandamide or AEA) and 2-arachidonoylglycerol (2-AG), as well as phytocannabinoids, such as delta(9)-tetrahydrocannabinol (THC). Mediates many cannabinoid-induced effects, acting, among others, on food intake, memory loss, gastrointestinal motility, catalepsy, ambulatory activity, anxiety, chronic pain. Signaling typically involves reduction in cyclic AMP. In the hypothalamus, may have a dual effect on mitochondrial respiration depending upon the agonist dose and possibly upon the cell type. Increases respiration at low doses, while decreases respiration at high doses. At high doses, CNR1 signal transduction involves G-protein alpha-i protein activation and subsequent inhibition of mitochondrial soluble adenylate cyclase, decrease in cyclic AMP concentration, inhibition of protein kinase A (PKA)-dependent phosphorylation of specific subunits of the mitochondrial electron transport system, including NDUFS2. In the hypothalamus, inhibits leptin-induced reactive oxygen species (ROS) formation and mediates cannabinoid-induced increase in SREBF1 and FASN gene expression. In response to cannabinoids, drives the release of orexigenic beta-endorphin, not that of melanocyte-stimulating hormone alpha/alpha-MSH, from hypothalamic POMC neurons, hence promoting food intake. In the hippocampus, regulates cellular respiration and energy production in response to cannabinoids. Involved in cannabinoid-dependent depolarization-induced suppression of inhibition (DSI), a process in which depolarization of CA1 postsynaptic pyramidal neurons mobilizes eCBs, which retrogradely activate presynaptic CB1 receptors, transiently decreasing GABAergic inhibitory neurotransmission. Also reduces excitatory synaptic transmission. In superior cervical ganglions and cerebral vascular smooth muscle cells, inhibits voltage-gated Ca(2+) channels in a constitutive, as well as agonist-dependent manner. In cerebral vascular smooth muscle cells, inhibition of voltage-gated Ca(2+) channels leads to vasodilation and decrease in vascular tone. Induces leptin production in adipocytes and reduces LRP2-mediated leptin clearance in the kidney, hence participating in hyperleptinemia. In adipose tissue, CNR1 signaling leads to increased expression of SREBF1, ACACA and FASN genes. In the liver, activation by endocannabinoids leads to increased de novo lipogenesis and reduced fatty acid catabolism, associated with increased expression of SREBF1/SREBP-1, GCK, ACACA, ACACB and FASN genes. May also affect de novo cholesterol synthesis and HDL-cholesteryl ether uptake. Peripherally modulates energy metabolism. In high carbohydrate diet-induced obesity, may decrease the expression of mitochondrial dihydrolipoyl dehydrogenase/DLD in striated muscles, as well as that of selected glucose/ pyruvate metabolic enzymes, hence affecting energy expenditure through mitochondrial metabolism. In response to cannabinoid anandamide, elicits a pro-inflammatory response in macrophages, which involves NLRP3 inflammasome activation and IL1B and IL18 secretion. In macrophages infiltrating pancreatic islets, this process may participate in the progression of type-2 diabetes and associated loss of pancreatic beta-cells. This chain is Cannabinoid receptor 1 (CNR1), found in Felis catus (Cat).